The chain runs to 376 residues: UPF0754 membrane protein BH1148 (376 aa).

The next 2 membrane-spanning stretches (helical) occupy residues 3–23 (LILF…SLAI) and 355–375 (YLGA…ILLI).

Belongs to the UPF0754 family.

Its subcellular location is the cell membrane. In Halalkalibacterium halodurans (strain ATCC BAA-125 / DSM 18197 / FERM 7344 / JCM 9153 / C-125) (Bacillus halodurans), this protein is UPF0754 membrane protein BH1148.